The following is a 287-amino-acid chain: MADKVRLGLIQLCGCSGCHISLLDLHEQLLDVLPNLEIVYAPIIADVKEIPECDVFLIEGGARNEHDEHLIHEIREKSKVVIAWGTCAVYGGIPGLGNLYSAEQLKKTVYGTETTDNVGELPSDEMVPPLTNSVMPVPSIVDVEYVIPGCPPRPEINAGAIVALLEGRDPELPKKIVCDECPRTKENVIPETFKRTFEGTPDPEKCLFEQGYTCVGMGTRAGCGALCPSAGVPCRGCYGKTDEVLDQGSSLANTYAAAGDEALKISDKSALFNRFTLPAALISKKQE.

This sequence belongs to the [NiFe]/[NiFeSe] hydrogenase small subunit family. The F420-non-reducing hydrogenase vhu is composed of four subunits; VhuA, VhuD, VhuG and VhuU.

The chain is F420-non-reducing hydrogenase vhu subunit G (vhuG) from Methanococcus voltae.